Here is a 102-residue protein sequence, read N- to C-terminus: Large ribosomal subunit protein bL21 (102 aa).

It belongs to the bacterial ribosomal protein bL21 family. In terms of assembly, part of the 50S ribosomal subunit. Contacts protein L20.

This protein binds to 23S rRNA in the presence of protein L20. In Macrococcus caseolyticus (strain JCSC5402) (Macrococcoides caseolyticum), this protein is Large ribosomal subunit protein bL21.